A 318-amino-acid chain; its full sequence is ADP-L-glycero-D-manno-heptose-6-epimerase (318 aa).

NADP(+) is bound by residues 10–11 (FI), 31–32 (DN), K38, K53, 76–80 (QGACS), and N93. Y141 functions as the Proton acceptor in the catalytic mechanism. Residue K145 participates in NADP(+) binding. Substrate is bound at residue N172. Residues V173 and K181 each coordinate NADP(+). The Proton acceptor role is filled by K181. Residues R183, H190, 204 to 207 (FEGS), R212, and Y276 contribute to the substrate site.

This sequence belongs to the NAD(P)-dependent epimerase/dehydratase family. HldD subfamily. In terms of assembly, homopentamer. The cofactor is NADP(+).

The enzyme catalyses ADP-D-glycero-beta-D-manno-heptose = ADP-L-glycero-beta-D-manno-heptose. Its pathway is nucleotide-sugar biosynthesis; ADP-L-glycero-beta-D-manno-heptose biosynthesis; ADP-L-glycero-beta-D-manno-heptose from D-glycero-beta-D-manno-heptose 7-phosphate: step 4/4. Its function is as follows. Catalyzes the interconversion between ADP-D-glycero-beta-D-manno-heptose and ADP-L-glycero-beta-D-manno-heptose via an epimerization at carbon 6 of the heptose. This is ADP-L-glycero-D-manno-heptose-6-epimerase from Brachyspira hyodysenteriae (strain ATCC 49526 / WA1).